The primary structure comprises 341 residues: Alpha-ketoglutarate-dependent dioxygenase oryG (341 aa).

His-100 serves as a coordination point for substrate. Fe cation-binding residues include His-140 and Asp-142. Position 167 (Thr-167) interacts with 2-oxoglutarate. Residue His-299 participates in Fe cation binding. 2-oxoglutarate contacts are provided by Arg-311 and Arg-315. Arg-315 contacts substrate.

This sequence belongs to the TfdA dioxygenase family. The cofactor is Fe(2+).

It participates in secondary metabolite biosynthesis. In terms of biological role, alpha-ketoglutarate-dependent dioxygenase; part of the gene cluster that mediates the biosynthesis of oryzines, natural products with an unusual maleidride backbone. The two subunits of the fungal fatty acid synthase oryfasA and oryfasB probably form octenoic acid. This fatty acid is most likely activated by the acyl-CoA ligase oryP to give octenyl-CoA before the citrate synthase-like protein oryE catalyzes condensation with oxaloacetate to form tricarboxylic acid. The next steps of the pathways are conjectural, but a favorite possible route has been proposed, beginning with decarboxylation and concomitant dehydration by the decarboxylase oryM, followed by tautomerization, which may lead to the production of a diene intermediate. Reduction of this diene intermediate could give the known metabolite piliformic acid. On the pathway to oryzine B and oryzine A, however, hydroxylation of the diene by the alpha-ketoglutarate-dependent dioxygenase oryG and lactonisation by the lactonohydrolases oryH or oryL could give oryzine B directly. Finally, enoyl reduction by the dehydrogenase oryD would then convert oryzine B into oryzine A. This chain is Alpha-ketoglutarate-dependent dioxygenase oryG, found in Aspergillus oryzae (strain ATCC 42149 / RIB 40) (Yellow koji mold).